Consider the following 98-residue polypeptide: Small ribosomal subunit protein uS19 (98 aa).

Belongs to the universal ribosomal protein uS19 family.

Functionally, protein S19 forms a complex with S13 that binds strongly to the 16S ribosomal RNA. The chain is Small ribosomal subunit protein uS19 from Chlorobaculum tepidum (strain ATCC 49652 / DSM 12025 / NBRC 103806 / TLS) (Chlorobium tepidum).